The following is a 312-amino-acid chain: DNA-directed RNA polymerase subunit alpha (312 aa).

Residues 1–227 (MNNFYIKCLK…SFFSSLLENK (227 aa)) form an alpha N-terminal domain (alpha-NTD) region. Positions 243 to 312 (PKNPHTNIAI…KNKLGIVLSN (70 aa)) are alpha C-terminal domain (alpha-CTD).

This sequence belongs to the RNA polymerase alpha chain family. As to quaternary structure, in plastids the minimal PEP RNA polymerase catalytic core is composed of four subunits: alpha, beta, beta', and beta''. When a (nuclear-encoded) sigma factor is associated with the core the holoenzyme is formed, which can initiate transcription.

It localises to the plastid. The protein localises to the chloroplast. It catalyses the reaction RNA(n) + a ribonucleoside 5'-triphosphate = RNA(n+1) + diphosphate. DNA-dependent RNA polymerase catalyzes the transcription of DNA into RNA using the four ribonucleoside triphosphates as substrates. The sequence is that of DNA-directed RNA polymerase subunit alpha from Trieres chinensis (Marine centric diatom).